The chain runs to 319 residues: Thioredoxin reductase (319 aa).

37 to 44 (ERGVPGGQ) serves as a coordination point for FAD. Cys136 and Cys139 are oxidised to a cystine. Residue 279-288 (DVRAKSLRQI) coordinates FAD.

This sequence belongs to the class-II pyridine nucleotide-disulfide oxidoreductase family. Homodimer. Requires FAD as cofactor.

The protein resides in the cytoplasm. The catalysed reaction is [thioredoxin]-dithiol + NADP(+) = [thioredoxin]-disulfide + NADPH + H(+). The polypeptide is Thioredoxin reductase (trxB) (Listeria innocua serovar 6a (strain ATCC BAA-680 / CLIP 11262)).